We begin with the raw amino-acid sequence, 196 residues long: UMP-CMP kinase (196 aa).

13–18 (GAGKGT) contacts ATP. Position 33 is a phosphoserine (serine 33). The NMP stretch occupies residues 33 to 63 (SAGELLRDERKNPDSQYGELIEKYIKEGKIV). Residue arginine 39 coordinates a ribonucleoside 5'-phosphate. 2 positions are modified to N6-acetyllysine: lysine 43 and lysine 55. 61-63 (KIV) serves as a coordination point for a ribonucleoside 5'-phosphate. A Glycyl lysine isopeptide (Lys-Gly) (interchain with G-Cter in SUMO2) cross-link involves residue lysine 73. Residue 93–96 (GFPR) participates in a ribonucleoside 5'-phosphate binding. Residue asparagine 100 coordinates CMP. Lysine 106 carries the post-translational modification N6-succinyllysine. Positions 133-143 (ERGKSSGRSDD) are LID. Arginine 134 lines the ATP pocket. Positions 140 and 151 each coordinate a ribonucleoside 5'-phosphate. Lysine 179 contributes to the ATP binding site. The residue at position 180 (serine 180) is a Phosphoserine.

The protein belongs to the adenylate kinase family. UMP-CMP kinase subfamily. As to quaternary structure, monomer. The cofactor is Mg(2+).

Its subcellular location is the nucleus. It localises to the cytoplasm. The catalysed reaction is CMP + ATP = CDP + ADP. It catalyses the reaction dCMP + ATP = dCDP + ADP. It carries out the reaction UMP + ATP = UDP + ADP. The enzyme catalyses a 2'-deoxyribonucleoside 5'-diphosphate + ATP = a 2'-deoxyribonucleoside 5'-triphosphate + ADP. The catalysed reaction is a ribonucleoside 5'-diphosphate + ATP = a ribonucleoside 5'-triphosphate + ADP. Catalyzes the phosphorylation of pyrimidine nucleoside monophosphates at the expense of ATP. Plays an important role in de novo pyrimidine nucleotide biosynthesis. Has preference for UMP and CMP as phosphate acceptors. Also displays broad nucleoside diphosphate kinase activity. In Mus musculus (Mouse), this protein is UMP-CMP kinase (Cmpk1).